Consider the following 181-residue polypeptide: Large ribosomal subunit protein uL5 (181 aa).

It belongs to the universal ribosomal protein uL5 family. In terms of assembly, part of the 50S ribosomal subunit; part of the 5S rRNA/L5/L18/L25 subcomplex. Contacts the 5S rRNA and the P site tRNA. Forms a bridge to the 30S subunit in the 70S ribosome.

Its function is as follows. This is one of the proteins that bind and probably mediate the attachment of the 5S RNA into the large ribosomal subunit, where it forms part of the central protuberance. In the 70S ribosome it contacts protein S13 of the 30S subunit (bridge B1b), connecting the 2 subunits; this bridge is implicated in subunit movement. Contacts the P site tRNA; the 5S rRNA and some of its associated proteins might help stabilize positioning of ribosome-bound tRNAs. The chain is Large ribosomal subunit protein uL5 from Colwellia psychrerythraea (strain 34H / ATCC BAA-681) (Vibrio psychroerythus).